We begin with the raw amino-acid sequence, 297 residues long: 4-hydroxy-tetrahydrodipicolinate synthase (297 aa).

Thr-50 lines the pyruvate pocket. The Proton donor/acceptor role is filled by Tyr-139. Lys-167 serves as the catalytic Schiff-base intermediate with substrate. Residue Val-209 coordinates pyruvate.

This sequence belongs to the DapA family. Homotetramer; dimer of dimers.

It is found in the cytoplasm. It catalyses the reaction L-aspartate 4-semialdehyde + pyruvate = (2S,4S)-4-hydroxy-2,3,4,5-tetrahydrodipicolinate + H2O + H(+). The protein operates within amino-acid biosynthesis; L-lysine biosynthesis via DAP pathway; (S)-tetrahydrodipicolinate from L-aspartate: step 3/4. Functionally, catalyzes the condensation of (S)-aspartate-beta-semialdehyde [(S)-ASA] and pyruvate to 4-hydroxy-tetrahydrodipicolinate (HTPA). In Microcystis aeruginosa (strain NIES-843 / IAM M-2473), this protein is 4-hydroxy-tetrahydrodipicolinate synthase.